A 517-amino-acid chain; its full sequence is Serine hydroxymethyltransferase 1, mitochondrial (517 aa).

A mitochondrion-targeting transit peptide spans 1–31; the sequence is MAMALALRRLSSSADKPLQRLFNGGHLYSMS. Lys287 bears the N6-(pyridoxal phosphate)lysine mark.

Belongs to the SHMT family. In terms of assembly, homotetramer. Requires pyridoxal 5'-phosphate as cofactor.

It localises to the mitochondrion. It carries out the reaction (6R)-5,10-methylene-5,6,7,8-tetrahydrofolate + glycine + H2O = (6S)-5,6,7,8-tetrahydrofolate + L-serine. The protein operates within one-carbon metabolism; tetrahydrofolate interconversion. Catalyzes the interconversion of serine and glycine. The polypeptide is Serine hydroxymethyltransferase 1, mitochondrial (Flaveria pringlei).